A 310-amino-acid polypeptide reads, in one-letter code: Choline trimethylamine-lyase activating enzyme (310 aa).

A Radical SAM core domain is found at 17–304 (YDGPGVRTLV…EACIRKYDFP (288 aa)). [4Fe-4S] cluster is bound by residues C31, C35, C38, C57, C60, C63, and C99. 37-39 (WCS) serves as a coordination point for S-adenosyl-L-methionine. 4Fe-4S ferredoxin-type domains lie at 48–77 (YQVL…ISAS) and 79–109 (LRHG…VVGE). S-adenosyl-L-methionine is bound by residues G139, 188–190 (DVK), and H264.

The protein belongs to the organic radical-activating enzymes family. Monomer. It depends on [4Fe-4S] cluster as a cofactor.

The catalysed reaction is glycyl-[protein] + reduced [flavodoxin] + S-adenosyl-L-methionine = glycin-2-yl radical-[protein] + semiquinone [flavodoxin] + 5'-deoxyadenosine + L-methionine + H(+). It functions in the pathway amine and polyamine metabolism; choline degradation. Functionally, catalyzes activation of the choline trimethylamine-lyase CutC under anaerobic conditions by generation of an organic free radical on a glycine residue, via a homolytic cleavage of S-adenosyl-L-methionine (SAM). Is involved in the anaerobic choline utilization pathway that allows D.alaskensis to grow on choline as a source of carbon and energy. The sequence is that of Choline trimethylamine-lyase activating enzyme from Oleidesulfovibrio alaskensis (strain ATCC BAA-1058 / DSM 17464 / G20) (Desulfovibrio alaskensis).